Consider the following 266-residue polypeptide: Ribosomal RNA small subunit methyltransferase A (266 aa).

S-adenosyl-L-methionine contacts are provided by histidine 13, leucine 15, glycine 40, glutamate 61, aspartate 85, and asparagine 104.

This sequence belongs to the class I-like SAM-binding methyltransferase superfamily. rRNA adenine N(6)-methyltransferase family. RsmA subfamily.

Its subcellular location is the cytoplasm. The catalysed reaction is adenosine(1518)/adenosine(1519) in 16S rRNA + 4 S-adenosyl-L-methionine = N(6)-dimethyladenosine(1518)/N(6)-dimethyladenosine(1519) in 16S rRNA + 4 S-adenosyl-L-homocysteine + 4 H(+). In terms of biological role, specifically dimethylates two adjacent adenosines (A1518 and A1519) in the loop of a conserved hairpin near the 3'-end of 16S rRNA in the 30S particle. May play a critical role in biogenesis of 30S subunits. In Parabacteroides distasonis (strain ATCC 8503 / DSM 20701 / CIP 104284 / JCM 5825 / NCTC 11152), this protein is Ribosomal RNA small subunit methyltransferase A.